Consider the following 71-residue polypeptide: Sec-independent protein translocase protein TatA (71 aa).

The helical transmembrane segment at 9–29 threads the bilayer; that stretch reads LLLILAIVVILFGASRLPALG. Positions 43 to 71 are disordered; the sequence is FGGEDEKPTASGNGSTPTQSSSDQGSKQA. The span at 52 to 71 shows a compositional bias: polar residues; it reads ASGNGSTPTQSSSDQGSKQA.

This sequence belongs to the TatA/E family. As to quaternary structure, the Tat system comprises two distinct complexes: a TatABC complex, containing multiple copies of TatA, TatB and TatC subunits, and a separate TatA complex, containing only TatA subunits. Substrates initially bind to the TatABC complex, which probably triggers association of the separate TatA complex to form the active translocon.

It localises to the cell inner membrane. In terms of biological role, part of the twin-arginine translocation (Tat) system that transports large folded proteins containing a characteristic twin-arginine motif in their signal peptide across membranes. TatA could form the protein-conducting channel of the Tat system. The sequence is that of Sec-independent protein translocase protein TatA from Anaeromyxobacter dehalogenans (strain 2CP-C).